The chain runs to 282 residues: MKRTVDFSMFRCPLCDSSMDAASGKSLICTERGHTFDLSRHGYVNFLTKPVKTSYGAELFEARSRLIGECGFFDPLHDAIAELISHPKSGHEAFTILDSGCGEGSHLNALCGFDYAGKAAIGTGIDLSKDGILKASKAFKDLMWAVADVARAPFHDRQFDVVLSIFSPSNYAEFHRLLKNDGMLIKVVPRSDYLIELRQFLYTDSPRRTYSNTAAVERFTANAAHSRPVRLRYVKTLDQQAIHWLLKMTPLAWSAPKDRVSLLKEMKSADITVDVDILIGMK.

Zn(2+) is bound by residues Cys-12, Cys-15, Cys-29, and His-34. 103–104 (EG) serves as a coordination point for S-adenosyl-L-methionine.

The protein belongs to the methyltransferase superfamily. RlmA family.

The chain is Putative 23S rRNA (guanine-N(1)-)-methyltransferase YxjB (yxjB) from Bacillus subtilis (strain 168).